We begin with the raw amino-acid sequence, 342 residues long: Ferredoxin--NADP reductase (342 aa).

Residues Cys-17, Asp-36, Gln-44, Tyr-49, Val-89, Phe-124, Asp-289, and Thr-330 each contribute to the FAD site.

This sequence belongs to the ferredoxin--NADP reductase type 2 family. In terms of assembly, homodimer. It depends on FAD as a cofactor.

The catalysed reaction is 2 reduced [2Fe-2S]-[ferredoxin] + NADP(+) + H(+) = 2 oxidized [2Fe-2S]-[ferredoxin] + NADPH. This Nitrobacter winogradskyi (strain ATCC 25391 / DSM 10237 / CIP 104748 / NCIMB 11846 / Nb-255) protein is Ferredoxin--NADP reductase.